The chain runs to 482 residues: Glutamate--tRNA ligase (482 aa).

The short motif at 9 to 19 (PSPTGYLHIGG) is the 'HIGH' region element. Positions 252-256 (KLSKR) match the 'KMSKS' region motif. Residue Lys-255 coordinates ATP.

It belongs to the class-I aminoacyl-tRNA synthetase family. Glutamate--tRNA ligase type 1 subfamily. Monomer.

The protein resides in the cytoplasm. It catalyses the reaction tRNA(Glu) + L-glutamate + ATP = L-glutamyl-tRNA(Glu) + AMP + diphosphate. In terms of biological role, catalyzes the attachment of glutamate to tRNA(Glu) in a two-step reaction: glutamate is first activated by ATP to form Glu-AMP and then transferred to the acceptor end of tRNA(Glu). The sequence is that of Glutamate--tRNA ligase from Ureaplasma urealyticum serovar 10 (strain ATCC 33699 / Western).